Reading from the N-terminus, the 155-residue chain is Small ribosomal subunit protein uS7 (155 aa).

This sequence belongs to the universal ribosomal protein uS7 family. As to quaternary structure, part of the 30S ribosomal subunit. Contacts proteins S9 and S11.

One of the primary rRNA binding proteins, it binds directly to 16S rRNA where it nucleates assembly of the head domain of the 30S subunit. Is located at the subunit interface close to the decoding center, probably blocks exit of the E-site tRNA. This is Small ribosomal subunit protein uS7 from Xylella fastidiosa (strain 9a5c).